We begin with the raw amino-acid sequence, 416 residues long: Putative UV-damage repair protein UvrX (416 aa).

The 185-residue stretch at 12–196 (ILCVDMKSFY…RPLSKMWGIG (185 aa)) folds into the UmuC domain. Residues aspartate 16 and aspartate 115 each contribute to the Mg(2+) site. Residue glutamate 116 is part of the active site.

Belongs to the DNA polymerase type-Y family. Mg(2+) is required as a cofactor.

This Bacillus subtilis (strain 168) protein is Putative UV-damage repair protein UvrX (uvrX).